The sequence spans 804 residues: Phenylalanine--tRNA ligase beta subunit (804 aa).

Positions 40–155 (GEGIKGVVIG…GDAETGADAL (116 aa)) constitute a tRNA-binding domain. The B5 domain maps to 409–484 (IKENVIRLSV…RLYGYDNIPS (76 aa)). Asp-462, Asp-468, Glu-471, and Glu-472 together coordinate Mg(2+). In terms of domain architecture, FDX-ACB spans 710–803 (PKYPSVTRDI…LEDKYQAVLR (94 aa)).

Belongs to the phenylalanyl-tRNA synthetase beta subunit family. Type 1 subfamily. Tetramer of two alpha and two beta subunits. The cofactor is Mg(2+).

The protein localises to the cytoplasm. It catalyses the reaction tRNA(Phe) + L-phenylalanine + ATP = L-phenylalanyl-tRNA(Phe) + AMP + diphosphate + H(+). This chain is Phenylalanine--tRNA ligase beta subunit, found in Bacillus licheniformis (strain ATCC 14580 / DSM 13 / JCM 2505 / CCUG 7422 / NBRC 12200 / NCIMB 9375 / NCTC 10341 / NRRL NRS-1264 / Gibson 46).